Reading from the N-terminus, the 526-residue chain is Hyaluronidase-5 (526 aa).

Residues 1–35 (MRVLYFKHSFFRSLLKSNGLPQTLLVFLLIPCYLT) form the signal peptide. Cystine bridges form between Cys-60/Cys-351, Cys-223/Cys-237, Cys-376/Cys-387, Cys-381/Cys-435, and Cys-437/Cys-443. Glu-147 acts as the Proton donor in catalysis. N-linked (GlcNAc...) asparagine glycans are attached at residues Asn-165 and Asn-179.

Belongs to the glycosyl hydrolase 56 family. As to expression, expressed in testis, epididymal sperm and epididymides (at protein level). Expressed at highest levels in testis with lesser amounts in epididymal sperm.

It localises to the cell membrane. The protein localises to the cytoplasmic vesicle. Its subcellular location is the secretory vesicle. It is found in the acrosome membrane. The protein resides in the secreted. It catalyses the reaction Random hydrolysis of (1-&gt;4)-linkages between N-acetyl-beta-D-glucosamine and D-glucuronate residues in hyaluronate.. Catalyzes the hydrolysis of hyaluronan into smaller oligosaccharide fragments. Does not appear to be essential for fertilization. The protein is Hyaluronidase-5 of Mus musculus (Mouse).